Consider the following 124-residue polypeptide: Late histone H2A.2.1 (124 aa).

Residues Met1–Ser18 show a composition bias toward basic residues. Residues Met1–Ala21 form a disordered region. The residue at position 2 (Ser2) is an N-acetylserine. Residue Ser2 is modified to Phosphoserine. Gln104 carries the post-translational modification N5-methylglutamine. A Glycyl lysine isopeptide (Lys-Gly) (interchain with G-Cter in ubiquitin) cross-link involves residue Lys119.

It belongs to the histone H2A family. The nucleosome is a histone octamer containing two molecules each of H2A, H2B, H3 and H4 assembled in one H3-H4 heterotetramer and two H2A-H2B heterodimers. The octamer wraps approximately 147 bp of DNA. In terms of processing, monoubiquitination of Lys-119 gives a specific tag for epigenetic transcriptional repression. Phosphorylation of Ser-2 directly represses transcription.

The protein localises to the nucleus. It localises to the chromosome. In terms of biological role, core component of nucleosome. Nucleosomes wrap and compact DNA into chromatin, limiting DNA accessibility to the cellular machineries which require DNA as a template. Histones thereby play a central role in transcription regulation, DNA repair, DNA replication and chromosomal stability. DNA accessibility is regulated via a complex set of post-translational modifications of histones, also called histone code, and nucleosome remodeling. The protein is Late histone H2A.2.1 of Psammechinus miliaris (Green sea urchin).